The chain runs to 862 residues: Probable alpha,alpha-trehalose-phosphate synthase [UDP-forming] 11 (862 aa).

Position 5 is a phosphoserine (Ser-5). The glycosyltransferase stretch occupies residues 50 to 538; that stretch reads PKRIVVSNQL…ARSYDQDLQR (489 aa). The segment at 838–862 is disordered; that stretch reads SKHEQQKKQSKFTFQQPMGQCRKKA.

It in the N-terminal section; belongs to the glycosyltransferase 20 family. In the C-terminal section; belongs to the trehalose phosphatase family. Expressed in leaves, roots, stems and flowers.

The enzyme catalyses D-glucose 6-phosphate + UDP-alpha-D-glucose = alpha,alpha-trehalose 6-phosphate + UDP + H(+). The protein is Probable alpha,alpha-trehalose-phosphate synthase [UDP-forming] 11 (TPS11) of Arabidopsis thaliana (Mouse-ear cress).